Reading from the N-terminus, the 798-residue chain is Suppressor of spindle checkpoint defect 1 (798 aa).

A coiled-coil region spans residues 339–359; it reads ESIQQSQVNVDDMCNRIANME.

Belongs to the APC5 family. In terms of assembly, the APC/C complex is probably composed of at least 12 subunits: apc-2, apc-10, apc-11, cdc-26, emb-1, emb-27, emb-30, mat-1, mat-2, mat-3, such-1 and gfi-3. Expressed in head neurons, vulval precursor cells and in mature sperm stored in the spermatheca.

Its pathway is protein modification; protein ubiquitination. Functionally, probable component of the anaphase promoting complex/cyclosome (APC/C), a cell cycle-regulated E3 ubiquitin ligase that controls progression through mitosis and the G1 phase of the cell cycle. The APC/C complex acts by mediating ubiquitination and subsequent degradation of target proteins. Required for the metaphase to anaphase transition in meiosis. Plays a role in the segregation of DNA and centrioles during meiosis in male germ cells. In Caenorhabditis elegans, this protein is Suppressor of spindle checkpoint defect 1.